The following is a 496-amino-acid chain: Bifunctional protein HldE (496 aa).

Residues 1-335 are ribokinase; it reads MIKHNPPSPE…GALFRSHGPT (335 aa). 211–214 is an ATP binding site; sequence NRKE. Residue Asp280 is part of the active site. The tract at residues 363–496 is cytidylyltransferase; that stretch reads FTNGCFDILH…IGKLRAGSTS (134 aa).

The protein in the N-terminal section; belongs to the carbohydrate kinase PfkB family. This sequence in the C-terminal section; belongs to the cytidylyltransferase family. In terms of assembly, homodimer.

It catalyses the reaction D-glycero-beta-D-manno-heptose 7-phosphate + ATP = D-glycero-beta-D-manno-heptose 1,7-bisphosphate + ADP + H(+). It carries out the reaction D-glycero-beta-D-manno-heptose 1-phosphate + ATP + H(+) = ADP-D-glycero-beta-D-manno-heptose + diphosphate. It participates in nucleotide-sugar biosynthesis; ADP-L-glycero-beta-D-manno-heptose biosynthesis; ADP-L-glycero-beta-D-manno-heptose from D-glycero-beta-D-manno-heptose 7-phosphate: step 1/4. Its pathway is nucleotide-sugar biosynthesis; ADP-L-glycero-beta-D-manno-heptose biosynthesis; ADP-L-glycero-beta-D-manno-heptose from D-glycero-beta-D-manno-heptose 7-phosphate: step 3/4. Functionally, catalyzes the phosphorylation of D-glycero-D-manno-heptose 7-phosphate at the C-1 position to selectively form D-glycero-beta-D-manno-heptose-1,7-bisphosphate. Its function is as follows. Catalyzes the ADP transfer from ATP to D-glycero-beta-D-manno-heptose 1-phosphate, yielding ADP-D-glycero-beta-D-manno-heptose. The sequence is that of Bifunctional protein HldE from Mesorhizobium japonicum (strain LMG 29417 / CECT 9101 / MAFF 303099) (Mesorhizobium loti (strain MAFF 303099)).